The sequence spans 431 residues: Glutamate-1-semialdehyde 2,1-aminomutase (431 aa).

Lysine 269 is modified (N6-(pyridoxal phosphate)lysine).

The protein belongs to the class-III pyridoxal-phosphate-dependent aminotransferase family. HemL subfamily. As to quaternary structure, homodimer. The cofactor is pyridoxal 5'-phosphate.

The protein resides in the cytoplasm. The catalysed reaction is (S)-4-amino-5-oxopentanoate = 5-aminolevulinate. It participates in porphyrin-containing compound metabolism; protoporphyrin-IX biosynthesis; 5-aminolevulinate from L-glutamyl-tRNA(Glu): step 2/2. Its pathway is porphyrin-containing compound metabolism; chlorophyll biosynthesis. The polypeptide is Glutamate-1-semialdehyde 2,1-aminomutase (Chlorobium phaeovibrioides (strain DSM 265 / 1930) (Prosthecochloris vibrioformis (strain DSM 265))).